The following is a 194-amino-acid chain: Inosine triphosphate pyrophosphatase (194 aa).

10–15 (TSSKKK) lines the ITP pocket. Glu37 contributes to the Mg(2+) binding site. Residues Lys49, 65–66 (DV), Lys82, 142–145 (FGWD), Lys166, and 171–172 (HR) each bind ITP.

This sequence belongs to the HAM1 NTPase family. Homodimer. It depends on Mg(2+) as a cofactor. Mn(2+) serves as cofactor.

It localises to the cytoplasm. The enzyme catalyses ITP + H2O = IMP + diphosphate + H(+). It catalyses the reaction dITP + H2O = dIMP + diphosphate + H(+). The catalysed reaction is XTP + H2O = XMP + diphosphate + H(+). Functionally, pyrophosphatase that hydrolyzes non-canonical purine nucleotides such as inosine triphosphate (ITP), deoxyinosine triphosphate (dITP) or xanthosine 5'-triphosphate (XTP) to their respective monophosphate derivatives. The enzyme does not distinguish between the deoxy- and ribose forms. Probably excludes non-canonical purines from RNA and DNA precursor pools, thus preventing their incorporation into RNA and DNA and avoiding chromosomal lesions. This chain is Inosine triphosphate pyrophosphatase, found in Giardia intestinalis (strain ATCC 50803 / WB clone C6) (Giardia lamblia).